The primary structure comprises 436 residues: Tol-Pal system protein TolB (436 aa).

The N-terminal stretch at 1-28 (MRSFLKPLLTIAAMALGMTAVIPMPAWA) is a signal peptide.

The protein belongs to the TolB family. As to quaternary structure, the Tol-Pal system is composed of five core proteins: the inner membrane proteins TolA, TolQ and TolR, the periplasmic protein TolB and the outer membrane protein Pal. They form a network linking the inner and outer membranes and the peptidoglycan layer.

The protein resides in the periplasm. Part of the Tol-Pal system, which plays a role in outer membrane invagination during cell division and is important for maintaining outer membrane integrity. The sequence is that of Tol-Pal system protein TolB from Mesorhizobium japonicum (strain LMG 29417 / CECT 9101 / MAFF 303099) (Mesorhizobium loti (strain MAFF 303099)).